A 235-amino-acid polypeptide reads, in one-letter code: uncharacterized protein (235 aa).

Disordered stretches follow at residues Met1–Ser36 and Val213–Gln235.

This is an uncharacterized protein from Homo sapiens (Human).